The sequence spans 330 residues: Autoinducer 2 import system permease protein LsrD (330 aa).

Over 1–4 (MRIR) the chain is Cytoplasmic. The helical transmembrane segment at 5–25 (YGWELALAALLVIEIVSFGAI) threads the bilayer. Residues 26–42 (NPRMLDLNMLLFSTSDF) are Periplasmic-facing. A helical membrane pass occupies residues 43–63 (ICIGIVALPLTMVIVSGGIDI). Residues 64–67 (SFGS) lie on the Cytoplasmic side of the membrane. 2 helical membrane passes run 68–88 (TIGLCAIALGVLFQSGVPMPL) and 89–109 (AILLTLLLGALCGLINAGLII). Over 110–115 (YTKVNP) the chain is Cytoplasmic. Residues 116 to 136 (LVITLGTLYLFAGSALLLSGM) form a helical membrane-spanning segment. At 137 to 159 (AGATGYEGIGGFPMAFTDFANLD) the chain is on the periplasmic side. Residues 160–180 (VLGLPVPLIIFLICLLVFWLW) traverse the membrane as a helical segment. Residues 181-209 (LHKTHAGRNVFLIGQSPRVALYSAIPVNR) lie on the Cytoplasmic side of the membrane. The helical transmembrane segment at 210 to 230 (TLCALYAMTGLASAVAAVLLV) threads the bilayer. Over 231 to 237 (SYFGSAR) the chain is Periplasmic. The next 2 helical transmembrane spans lie at 238–258 (SDLGASFLMPAITAVVLGGAN) and 259–279 (IYGGSGAIIGTAIAVLLVGYL). Topologically, residues 280 to 285 (QQGLQM) are periplasmic. Residues 286-306 (AGVPNQVSSALSGALLIVVVV) form a helical membrane-spanning segment. Residues 307–330 (GRSVSLHRQQIKEWLARRANNPLP) lie on the Cytoplasmic side of the membrane.

It belongs to the binding-protein-dependent transport system permease family. AraH/RbsC subfamily. In terms of assembly, the complex is composed of two ATP-binding proteins (LsrA), two transmembrane proteins (LsrC and LsrD) and a solute-binding protein (LsrB).

The protein localises to the cell inner membrane. In terms of biological role, part of the ABC transporter complex LsrABCD involved in autoinducer 2 (AI-2) import. Probably responsible for the translocation of the substrate across the membrane. This chain is Autoinducer 2 import system permease protein LsrD (lsrD), found in Escherichia coli O157:H7.